The sequence spans 180 residues: dCTP deaminase, dUMP-forming (180 aa).

DCTP is bound by residues 100–105 (RSSLGR), D117, 125–127 (TLE), Q146, Y160, and Q167. E127 acts as the Proton donor/acceptor in catalysis.

The protein belongs to the dCTP deaminase family. As to quaternary structure, homotrimer.

The enzyme catalyses dCTP + 2 H2O = dUMP + NH4(+) + diphosphate. It functions in the pathway pyrimidine metabolism; dUMP biosynthesis; dUMP from dCTP: step 1/1. Bifunctional enzyme that catalyzes both the deamination of dCTP to dUTP and the hydrolysis of dUTP to dUMP without releasing the toxic dUTP intermediate. The protein is dCTP deaminase, dUMP-forming of Persephonella marina (strain DSM 14350 / EX-H1).